The chain runs to 269 residues: 23S rRNA (adenosine(1067)-2'-O)-methyltransferase (269 aa).

S-adenosyl-L-methionine contacts are provided by Arg135, Arg165, Leu195, Gly218, Ile238, and Leu247.

It belongs to the class IV-like SAM-binding methyltransferase superfamily. RNA methyltransferase TsnR/AvirB family. As to quaternary structure, homodimer.

It carries out the reaction adenosine(1067) in 23S rRNA + S-adenosyl-L-methionine = 2'-O-methyladenosine(1067) in 23S rRNA + S-adenosyl-L-homocysteine + H(+). In terms of biological role, specifically methylates the adenosine-1067 in 23S ribosomal RNA. Confers resistance to antibiotic thiostrepton. In Streptomyces azureus, this protein is 23S rRNA (adenosine(1067)-2'-O)-methyltransferase (tsnR).